A 207-amino-acid polypeptide reads, in one-letter code: Chloramphenicol acetyltransferase (207 aa).

H186 (proton acceptor) is an active-site residue.

It belongs to the chloramphenicol acetyltransferase family. As to quaternary structure, homotrimer.

The enzyme catalyses chloramphenicol + acetyl-CoA = chloramphenicol 3-acetate + CoA. This enzyme is an effector of chloramphenicol resistance in bacteria. In Clostridium perfringens, this protein is Chloramphenicol acetyltransferase (catP).